The following is a 67-amino-acid chain: ATP synthase F(0) complex subunit 8 (67 aa).

A helical membrane pass occupies residues 8–24 (TWFITILSMLITLFILF). Lys-54 is subject to N6-acetyllysine; alternate. Position 54 is an N6-succinyllysine; alternate (Lys-54). Lys-57 carries the post-translational modification N6-acetyllysine.

The protein belongs to the ATPase protein 8 family. As to quaternary structure, component of the ATP synthase complex composed at least of ATP5F1A/subunit alpha, ATP5F1B/subunit beta, ATP5MC1/subunit c (homooctomer), MT-ATP6/subunit a, MT-ATP8/subunit 8, ATP5ME/subunit e, ATP5MF/subunit f, ATP5MG/subunit g, ATP5MK/subunit k, ATP5MJ/subunit j, ATP5F1C/subunit gamma, ATP5F1D/subunit delta, ATP5F1E/subunit epsilon, ATP5PF/subunit F6, ATP5PB/subunit b, ATP5PD/subunit d, ATP5PO/subunit OSCP. ATP synthase complex consists of a soluble F(1) head domain (subunits alpha(3) and beta(3)) - the catalytic core - and a membrane F(0) domain - the membrane proton channel (subunits c, a, 8, e, f, g, k and j). These two domains are linked by a central stalk (subunits gamma, delta, and epsilon) rotating inside the F1 region and a stationary peripheral stalk (subunits F6, b, d, and OSCP). Interacts with PRICKLE3.

It is found in the mitochondrion membrane. Subunit 8, of the mitochondrial membrane ATP synthase complex (F(1)F(0) ATP synthase or Complex V) that produces ATP from ADP in the presence of a proton gradient across the membrane which is generated by electron transport complexes of the respiratory chain. ATP synthase complex consist of a soluble F(1) head domain - the catalytic core - and a membrane F(1) domain - the membrane proton channel. These two domains are linked by a central stalk rotating inside the F(1) region and a stationary peripheral stalk. During catalysis, ATP synthesis in the catalytic domain of F(1) is coupled via a rotary mechanism of the central stalk subunits to proton translocation. In vivo, can only synthesize ATP although its ATP hydrolase activity can be activated artificially in vitro. Part of the complex F(0) domain. In Dugong dugon (Dugong), this protein is ATP synthase F(0) complex subunit 8.